A 348-amino-acid chain; its full sequence is uncharacterized protein (348 aa).

The span at 1–11 (MTNPQGPPNDP) shows a compositional bias: pro residues. Residues 1 to 83 (MTNPQGPPND…RSGRQAAHQA (83 aa)) form a disordered region. 2 helical membrane-spanning segments follow: residues 111–131 (LTVF…LIGG) and 235–255 (IPIL…DGTV).

The protein resides in the cell membrane. This is an uncharacterized protein from Mycobacterium tuberculosis (strain CDC 1551 / Oshkosh).